The sequence spans 161 residues: Dermonecrotic toxin LarSicTox-alphaI-1 (161 aa).

Belongs to the arthropod phospholipase D family. Class II subfamily. Mg(2+) is required as a cofactor. In terms of processing, contains 2 disulfide bonds. As to expression, expressed by the venom gland.

It localises to the secreted. The catalysed reaction is an N-(acyl)-sphingosylphosphocholine = an N-(acyl)-sphingosyl-1,3-cyclic phosphate + choline. It carries out the reaction an N-(acyl)-sphingosylphosphoethanolamine = an N-(acyl)-sphingosyl-1,3-cyclic phosphate + ethanolamine. The enzyme catalyses a 1-acyl-sn-glycero-3-phosphocholine = a 1-acyl-sn-glycero-2,3-cyclic phosphate + choline. It catalyses the reaction a 1-acyl-sn-glycero-3-phosphoethanolamine = a 1-acyl-sn-glycero-2,3-cyclic phosphate + ethanolamine. Functionally, dermonecrotic toxins cleave the phosphodiester linkage between the phosphate and headgroup of certain phospholipids (sphingolipid and lysolipid substrates), forming an alcohol (often choline) and a cyclic phosphate. This toxin acts on sphingomyelin (SM). It may also act on ceramide phosphoethanolamine (CPE), lysophosphatidylcholine (LPC) and lysophosphatidylethanolamine (LPE), but not on lysophosphatidylserine (LPS), and lysophosphatidylglycerol (LPG). It acts by transphosphatidylation, releasing exclusively cyclic phosphate products as second products. Induces dermonecrosis, hemolysis, increased vascular permeability, edema, inflammatory response, and platelet aggregation. In Loxosceles arizonica (Arizona brown spider), this protein is Dermonecrotic toxin LarSicTox-alphaI-1.